We begin with the raw amino-acid sequence, 148 residues long: Large ribosomal subunit protein uL15 (148 aa).

The segment covering 1–30 has biased composition (basic residues); the sequence is MPSRLRKTRKLRGHVSHGHGRIGKHRKHPG. The tract at residues 1–37 is disordered; it reads MPSRLRKTRKLRGHVSHGHGRIGKHRKHPGGRGNAGG. Histidine 39 carries the post-translational modification (3S)-3-hydroxyhistidine. N6-acetyllysine occurs at positions 47 and 55. Phosphoserine is present on serine 68. An N6-acetyllysine modification is found at lysine 110.

Belongs to the universal ribosomal protein uL15 family. In terms of assembly, component of the large ribosomal subunit. In terms of processing, hydroxylated on His-39 by MINA.

It is found in the cytoplasm. In terms of biological role, component of the large ribosomal subunit. The ribosome is a large ribonucleoprotein complex responsible for the synthesis of proteins in the cell. The chain is Large ribosomal subunit protein uL15 (RPL27A) from Bos taurus (Bovine).